The following is a 222-amino-acid chain: Coiled-coil domain-containing protein 43 (222 aa).

A Glycyl lysine isopeptide (Lys-Gly) (interchain with G-Cter in SUMO1) cross-link involves residue Lys93. Residues 119-143 adopt a coiled-coil conformation; it reads SEEEKQRKAALLAQYADVTDEEDEA. Residues 136–222 form a disordered region; it reads VTDEEDEADK…KRTQKGERKR (87 aa). The residue at position 137 (Thr137) is a Phosphothreonine. The span at 152 to 168 shows a compositional bias: polar residues; that stretch reads STANVSSDRTLFRNTNV. Residues 172–209 are compositionally biased toward basic and acidic residues; the sequence is LNARKLERDSLRDESQRKKEQDKLQREKDKLAKQERKE. Residues 175–217 are a coiled coil; it reads RKLERDSLRDESQRKKEQDKLQREKDKLAKQERKEKEKKRTQK. A compositionally biased stretch (basic residues) spans 210–222; it reads KEKKRTQKGERKR.

Belongs to the CCDC43 family.

This is Coiled-coil domain-containing protein 43 (Ccdc43) from Mus musculus (Mouse).